An 883-amino-acid chain; its full sequence is Integrator complex subunit 6 (883 aa).

Residues 3–227 (ILLFLIDTSA…QCLESLVQKV (225 aa)) enclose the VWFA domain. Residues 625 to 632 (MMIDEADE) carry the Inhibitory loop motif. A disordered region spans residues 666 to 686 (RRQSPAVNSHIGGKGPPAPMT). At Ser800 the chain carries Phosphoserine.

The protein belongs to the Integrator subunit 6 family. In terms of assembly, component of the Integrator complex, composed of core subunits INTS1, INTS2, INTS3, INTS4, INTS5, INTS6, INTS7, INTS8, INTS9/RC74, INTS10, INTS11/CPSF3L, INTS12, INTS13, INTS14 and INTS15. The core complex associates with protein phosphatase 2A subunits PPP2CA and PPP2R1A, to form the Integrator-PP2A (INTAC) complex.

The protein localises to the nucleus. The protein resides in the chromosome. Component of the integrator complex, a multiprotein complex that terminates RNA polymerase II (Pol II) transcription in the promoter-proximal region of genes. The integrator complex provides a quality checkpoint during transcription elongation by driving premature transcription termination of transcripts that are unfavorably configured for transcriptional elongation: the complex terminates transcription by (1) catalyzing dephosphorylation of the C-terminal domain (CTD) of Pol II subunit POLR2A/RPB1 and SUPT5H/SPT5, (2) degrading the exiting nascent RNA transcript via endonuclease activity and (3) promoting the release of Pol II from bound DNA. The integrator complex is also involved in terminating the synthesis of non-coding Pol II transcripts, such as enhancer RNAs (eRNAs), small nuclear RNAs (snRNAs), telomerase RNAs and long non-coding RNAs (lncRNAs). Within the integrator complex, INTS6 acts as a molecular adapter that promotes assembly of protein phosphatase 2A (PP2A) subunits to the integrator core complex, promoting recruitment of PP2A to transcription pause-release checkpoint. Mediates recruitment of cytoplasmic dynein to the nuclear envelope, probably as component of the integrator complex. The protein is Integrator complex subunit 6 (Ints6) of Mus musculus (Mouse).